The following is a 309-amino-acid chain: Probable ABC transporter permease protein YesP (309 aa).

6 helical membrane passes run 29 to 49, 84 to 104, 114 to 134, 167 to 187, 217 to 237, and 275 to 295; these read FIIGFLCFTVIPMGASLFLSF, FTYVLAGVPLRLGFALFIAVI, IYRTLFYLPSIIGGSVAVAIM, ALWTLILLSVWQFGSSMLIFL, LPILTPIIFFNLVMQTISAFM, and YASAMAWVMLVIVGLITLILF. Positions 80–294 constitute an ABC transmembrane type-1 domain; that stretch reads LKVTFTYVLA…VIVGLITLIL (215 aa).

Belongs to the binding-protein-dependent transport system permease family. MalFG subfamily.

It is found in the cell membrane. Its function is as follows. Part of a binding-protein-dependent transport system. Probably responsible for the translocation of the substrate across the membrane. This chain is Probable ABC transporter permease protein YesP (yesP), found in Bacillus subtilis (strain 168).